Here is a 146-residue protein sequence, read N- to C-terminus: D-aminoacyl-tRNA deacylase (146 aa).

The short motif at Gly-137–Pro-138 is the Gly-cisPro motif, important for rejection of L-amino acids element.

The protein belongs to the DTD family. As to quaternary structure, homodimer.

It is found in the cytoplasm. The enzyme catalyses glycyl-tRNA(Ala) + H2O = tRNA(Ala) + glycine + H(+). It catalyses the reaction a D-aminoacyl-tRNA + H2O = a tRNA + a D-alpha-amino acid + H(+). In terms of biological role, an aminoacyl-tRNA editing enzyme that deacylates mischarged D-aminoacyl-tRNAs. Also deacylates mischarged glycyl-tRNA(Ala), protecting cells against glycine mischarging by AlaRS. Acts via tRNA-based rather than protein-based catalysis; rejects L-amino acids rather than detecting D-amino acids in the active site. By recycling D-aminoacyl-tRNA to D-amino acids and free tRNA molecules, this enzyme counteracts the toxicity associated with the formation of D-aminoacyl-tRNA entities in vivo and helps enforce protein L-homochirality. The chain is D-aminoacyl-tRNA deacylase from Bacillus cereus (strain G9842).